A 683-amino-acid chain; its full sequence is Hexamerin 70b (683 aa).

An N-terminal signal peptide occupies residues 1–21 (MIVIMKAGFLFLASLCLLVQA). The Hemocyanin N-terminal domain maps to 32–153 (VTRQKNIYEL…VAVIHRPDTK (122 aa)). In terms of domain architecture, Hemocyanin middle spans 159–428 (PMYEVMPHLY…SIYKTILDYY (270 aa)). Asparagine 203 carries N-linked (GlcNAc...) asparagine glycosylation. The 237-residue stretch at 437-673 (KYTTEELNFP…IHVKEVLVHH (237 aa)) folds into the Hemocyanin C-terminal domain.

It belongs to the hemocyanin/hexamerin family. As to quaternary structure, probable homohexamer. Expressed in the fat body and secreted into the hemolymph (at protein level). Present in trophocytes and oenocytes of the fat body (at protein level).

Its subcellular location is the secreted. It is found in the nucleus. It localises to the cytoplasm. The protein resides in the cytoplasmic granule. Storage protein that may function as a nutrient supply to compensate for lack of dietary proteins during metamorphosis and egg production. In Apis mellifera (Honeybee), this protein is Hexamerin 70b.